A 568-amino-acid chain; its full sequence is Sulfite reductase [NADPH] hemoprotein beta-component (568 aa).

[4Fe-4S] cluster-binding residues include Cys426, Cys432, Cys471, and Cys475. A siroheme-binding site is contributed by Cys475.

The protein belongs to the nitrite and sulfite reductase 4Fe-4S domain family. Alpha(8)-beta(8). The alpha component is a flavoprotein, the beta component is a hemoprotein. It depends on siroheme as a cofactor. The cofactor is [4Fe-4S] cluster.

The enzyme catalyses hydrogen sulfide + 3 NADP(+) + 3 H2O = sulfite + 3 NADPH + 4 H(+). The protein operates within sulfur metabolism; hydrogen sulfide biosynthesis; hydrogen sulfide from sulfite (NADPH route): step 1/1. In terms of biological role, component of the sulfite reductase complex that catalyzes the 6-electron reduction of sulfite to sulfide. This is one of several activities required for the biosynthesis of L-cysteine from sulfate. The chain is Sulfite reductase [NADPH] hemoprotein beta-component from Xylella fastidiosa (strain M12).